The chain runs to 108 residues: Tetrahydromethanopterin S-methyltransferase subunit B (108 aa).

A helical membrane pass occupies residues 80–100 (AFYGIVVGLAFSGLLALIIFI).

Belongs to the MtrB family. The complex is composed of 8 subunits; MtrA, MtrB, MtrC, MtrD, MtrE, MtrF, MtrG and MtrH.

It is found in the cell membrane. It catalyses the reaction 5-methyl-5,6,7,8-tetrahydromethanopterin + coenzyme M + 2 Na(+)(in) = 5,6,7,8-tetrahydromethanopterin + methyl-coenzyme M + 2 Na(+)(out). Its pathway is one-carbon metabolism; methanogenesis from CO(2); methyl-coenzyme M from 5,10-methylene-5,6,7,8-tetrahydromethanopterin: step 2/2. Its function is as follows. Part of a complex that catalyzes the formation of methyl-coenzyme M and tetrahydromethanopterin from coenzyme M and methyl-tetrahydromethanopterin. This is an energy-conserving, sodium-ion translocating step. The polypeptide is Tetrahydromethanopterin S-methyltransferase subunit B (Methanosarcina acetivorans (strain ATCC 35395 / DSM 2834 / JCM 12185 / C2A)).